A 2250-amino-acid polypeptide reads, in one-letter code: DNA polymerase epsilon catalytic subunit A (2250 aa).

3 disordered regions span residues 1–63, 235–259, and 1990–2010; these read MPSR…GTAA, NGHGDDENRAWGAEDDTKKKKDKEP, and PGTEATSTMNPTKEKEKKAAS. Gly residues predominate over residues 32–41; that stretch reads GGGGGGGGVA. The span at 249–259 shows a compositional bias: basic and acidic residues; the sequence is DDTKKKKDKEP. Polar residues predominate over residues 1990–2000; that stretch reads PGTEATSTMNP. Residues Cys-2118, Cys-2121, Cys-2156, and Cys-2159 each contribute to the Zn(2+) site. The segment at 2118-2159 adopts a CysA-type zinc-finger fold; that stretch reads CKKCNAIRDVDLCRDPDRLPSVNPDSGEMLEPARKNWVCHKC. Cys-2190, Cys-2193, Cys-2205, and Cys-2207 together coordinate [4Fe-4S] cluster. The short motif at 2190–2207 is the CysB motif element; it reads CLKCSQTKSDNLAATCKC.

This sequence belongs to the DNA polymerase type-B family. Heterotetramer. Consists of 4 subunits: POL2, DPB2, DPB3 and DPB4. [4Fe-4S] cluster is required as a cofactor.

The protein localises to the nucleus. The enzyme catalyses DNA(n) + a 2'-deoxyribonucleoside 5'-triphosphate = DNA(n+1) + diphosphate. In terms of biological role, DNA polymerase II participates in chromosomal DNA replication. This is DNA polymerase epsilon catalytic subunit A (POL2) from Cryptococcus neoformans var. neoformans serotype D (strain JEC21 / ATCC MYA-565) (Filobasidiella neoformans).